The following is a 55-amino-acid chain: Large ribosomal subunit protein bL33 (55 aa).

This sequence belongs to the bacterial ribosomal protein bL33 family.

This Bartonella bacilliformis (strain ATCC 35685 / KC583 / Herrer 020/F12,63) protein is Large ribosomal subunit protein bL33.